Consider the following 173-residue polypeptide: Zinc resistance-associated protein homolog (173 aa).

The first 28 residues, Met1–Ala28, serve as a signal peptide directing secretion.

It belongs to the ZraP family.

This chain is Zinc resistance-associated protein homolog, found in Nitratidesulfovibrio vulgaris (strain ATCC 29579 / DSM 644 / CCUG 34227 / NCIMB 8303 / VKM B-1760 / Hildenborough) (Desulfovibrio vulgaris).